Here is a 104-residue protein sequence, read N- to C-terminus: MCSRGGSNSRPSDYETDALPTELLKHTKDVGEEKQTLHQIFADSMVIKGYSTGYTGHTRSSPGDLVIHKRELIFSHNIVIIVSPIYMISFIILLHYQSWHFSIY.

Residues 72 to 92 (LIFSHNIVIIVSPIYMISFII) traverse the membrane as a helical segment.

It localises to the membrane. This is an uncharacterized protein from Saccharomyces cerevisiae (strain ATCC 204508 / S288c) (Baker's yeast).